Here is a 120-residue protein sequence, read N- to C-terminus: Large ribosomal subunit protein bL12 (120 aa).

It belongs to the bacterial ribosomal protein bL12 family. As to quaternary structure, homodimer. Part of the ribosomal stalk of the 50S ribosomal subunit. Forms a multimeric L10(L12)X complex, where L10 forms an elongated spine to which 2 to 4 L12 dimers bind in a sequential fashion. Binds GTP-bound translation factors.

Its function is as follows. Forms part of the ribosomal stalk which helps the ribosome interact with GTP-bound translation factors. Is thus essential for accurate translation. The chain is Large ribosomal subunit protein bL12 from Listeria monocytogenes serovar 1/2a (strain ATCC BAA-679 / EGD-e).